The sequence spans 392 residues: Aspartate aminotransferase (392 aa).

G40, W126, and N176 together coordinate L-aspartate. An N6-(pyridoxal phosphate)lysine modification is found at K239.

It belongs to the class-I pyridoxal-phosphate-dependent aminotransferase family. As to quaternary structure, homodimer. It depends on pyridoxal 5'-phosphate as a cofactor.

The protein resides in the cytoplasm. The enzyme catalyses L-aspartate + 2-oxoglutarate = oxaloacetate + L-glutamate. The sequence is that of Aspartate aminotransferase from Bacillus sp. (strain YM-2).